A 162-amino-acid polypeptide reads, in one-letter code: 2-C-methyl-D-erythritol 2,4-cyclodiphosphate synthase (162 aa).

A divalent metal cation contacts are provided by aspartate 9 and histidine 11. 4-CDP-2-C-methyl-D-erythritol 2-phosphate is bound by residues 9–11 (DVH) and 35–36 (HS). Histidine 43 is a binding site for a divalent metal cation. 4-CDP-2-C-methyl-D-erythritol 2-phosphate is bound by residues 57-59 (DIG), 62-66 (FPDTD), 133-136 (TTTE), phenylalanine 140, and arginine 143.

It belongs to the IspF family. As to quaternary structure, homotrimer. A divalent metal cation is required as a cofactor.

It carries out the reaction 4-CDP-2-C-methyl-D-erythritol 2-phosphate = 2-C-methyl-D-erythritol 2,4-cyclic diphosphate + CMP. It participates in isoprenoid biosynthesis; isopentenyl diphosphate biosynthesis via DXP pathway; isopentenyl diphosphate from 1-deoxy-D-xylulose 5-phosphate: step 4/6. In terms of biological role, involved in the biosynthesis of isopentenyl diphosphate (IPP) and dimethylallyl diphosphate (DMAPP), two major building blocks of isoprenoid compounds. Catalyzes the conversion of 4-diphosphocytidyl-2-C-methyl-D-erythritol 2-phosphate (CDP-ME2P) to 2-C-methyl-D-erythritol 2,4-cyclodiphosphate (ME-CPP) with a corresponding release of cytidine 5-monophosphate (CMP). The chain is 2-C-methyl-D-erythritol 2,4-cyclodiphosphate synthase from Histophilus somni (strain 2336) (Haemophilus somnus).